Consider the following 251-residue polypeptide: Triosephosphate isomerase (251 aa).

Position 9–11 (N9–K11) interacts with substrate. Catalysis depends on H95, which acts as the Electrophile. The active-site Proton acceptor is the E167. Residues G173, S212, and G233 to G234 contribute to the substrate site.

The protein belongs to the triosephosphate isomerase family. As to quaternary structure, homodimer.

The protein resides in the cytoplasm. It carries out the reaction D-glyceraldehyde 3-phosphate = dihydroxyacetone phosphate. The protein operates within carbohydrate biosynthesis; gluconeogenesis. Its pathway is carbohydrate degradation; glycolysis; D-glyceraldehyde 3-phosphate from glycerone phosphate: step 1/1. Functionally, involved in the gluconeogenesis. Catalyzes stereospecifically the conversion of dihydroxyacetone phosphate (DHAP) to D-glyceraldehyde-3-phosphate (G3P). This Pseudomonas syringae pv. tomato (strain ATCC BAA-871 / DC3000) protein is Triosephosphate isomerase.